A 296-amino-acid chain; its full sequence is Acetylglutamate kinase (296 aa).

Substrate-binding positions include 67-68, Arg89, and Asn194; that span reads GG.

This sequence belongs to the acetylglutamate kinase family. ArgB subfamily.

The protein resides in the cytoplasm. It catalyses the reaction N-acetyl-L-glutamate + ATP = N-acetyl-L-glutamyl 5-phosphate + ADP. It functions in the pathway amino-acid biosynthesis; L-arginine biosynthesis; N(2)-acetyl-L-ornithine from L-glutamate: step 2/4. In terms of biological role, catalyzes the ATP-dependent phosphorylation of N-acetyl-L-glutamate. In Brucella anthropi (strain ATCC 49188 / DSM 6882 / CCUG 24695 / JCM 21032 / LMG 3331 / NBRC 15819 / NCTC 12168 / Alc 37) (Ochrobactrum anthropi), this protein is Acetylglutamate kinase.